The chain runs to 120 residues: Ribosome-binding factor A (120 aa).

It belongs to the RbfA family. Monomer. Binds 30S ribosomal subunits, but not 50S ribosomal subunits or 70S ribosomes.

The protein resides in the cytoplasm. One of several proteins that assist in the late maturation steps of the functional core of the 30S ribosomal subunit. Associates with free 30S ribosomal subunits (but not with 30S subunits that are part of 70S ribosomes or polysomes). Required for efficient processing of 16S rRNA. May interact with the 5'-terminal helix region of 16S rRNA. In Chlamydia pneumoniae (Chlamydophila pneumoniae), this protein is Ribosome-binding factor A.